Here is a 124-residue protein sequence, read N- to C-terminus: Fluoride-specific ion channel FluC (124 aa).

4 consecutive transmembrane segments (helical) span residues 1 to 21 (MIGV…LRFA), 34 to 54 (FYAA…YLYG), 62 to 82 (VPLA…TTFS), and 101 to 121 (FSYL…GLIL). Na(+) is bound by residues G76 and T79.

It belongs to the fluoride channel Fluc/FEX (TC 1.A.43) family.

The protein localises to the cell inner membrane. It carries out the reaction fluoride(in) = fluoride(out). With respect to regulation, na(+) is not transported, but it plays an essential structural role and its presence is essential for fluoride channel function. Functionally, fluoride-specific ion channel. Important for reducing fluoride concentration in the cell, thus reducing its toxicity. The protein is Fluoride-specific ion channel FluC of Azotobacter vinelandii (strain DJ / ATCC BAA-1303).